Consider the following 261-residue polypeptide: MMAHQHPYYLVEQSPWPLTGAISGLMMNLGLVLWFHTGNIILLFTGLLLLILTLVNWWRDIVREATFQGSHTAIVENGLRYPMILFITSEVCFFFAFFWAFFHSSLAPAVEIGVTWPPSGITPLNPFLVPLLNTAVLLSSGVTITWSHHSILAGNRNEAIQALFLTVVLGIYFTILQAWEYIDAPFTIADSVYGSTFFVATGFHGLHVIIGTTFLLVCLIRLSGHHFSTHHHFGFEAAAWYWHFVDVVWLFLYVCIYWWGS.

6 helical membrane passes run 31 to 51, 82 to 102, 126 to 146, 159 to 179, 197 to 217, and 239 to 259; these read LVLW…LLLI, PMIL…WAFF, PFLV…TITW, AIQA…LQAW, FFVA…FLLV, and AWYW…IYWW.

The protein belongs to the cytochrome c oxidase subunit 3 family. In terms of assembly, component of the cytochrome c oxidase (complex IV, CIV), a multisubunit enzyme composed of a catalytic core of 3 subunits and several supernumerary subunits. The complex exists as a monomer or a dimer and forms supercomplexes (SCs) in the inner mitochondrial membrane with ubiquinol-cytochrome c oxidoreductase (cytochrome b-c1 complex, complex III, CIII).

Its subcellular location is the mitochondrion inner membrane. It carries out the reaction 4 Fe(II)-[cytochrome c] + O2 + 8 H(+)(in) = 4 Fe(III)-[cytochrome c] + 2 H2O + 4 H(+)(out). In terms of biological role, component of the cytochrome c oxidase, the last enzyme in the mitochondrial electron transport chain which drives oxidative phosphorylation. The respiratory chain contains 3 multisubunit complexes succinate dehydrogenase (complex II, CII), ubiquinol-cytochrome c oxidoreductase (cytochrome b-c1 complex, complex III, CIII) and cytochrome c oxidase (complex IV, CIV), that cooperate to transfer electrons derived from NADH and succinate to molecular oxygen, creating an electrochemical gradient over the inner membrane that drives transmembrane transport and the ATP synthase. Cytochrome c oxidase is the component of the respiratory chain that catalyzes the reduction of oxygen to water. Electrons originating from reduced cytochrome c in the intermembrane space (IMS) are transferred via the dinuclear copper A center (CU(A)) of subunit 2 and heme A of subunit 1 to the active site in subunit 1, a binuclear center (BNC) formed by heme A3 and copper B (CU(B)). The BNC reduces molecular oxygen to 2 water molecules using 4 electrons from cytochrome c in the IMS and 4 protons from the mitochondrial matrix. The sequence is that of Cytochrome c oxidase subunit 3 (COIII) from Paracentrotus lividus (Common sea urchin).